A 350-amino-acid chain; its full sequence is Uroporphyrinogen decarboxylase (350 aa).

Residues 28–32, D78, Y155, S210, and H325 contribute to the substrate site; that span reads RQAGR.

Belongs to the uroporphyrinogen decarboxylase family. Homodimer.

The protein resides in the cytoplasm. It catalyses the reaction uroporphyrinogen III + 4 H(+) = coproporphyrinogen III + 4 CO2. Its pathway is porphyrin-containing compound metabolism; protoporphyrin-IX biosynthesis; coproporphyrinogen-III from 5-aminolevulinate: step 4/4. Catalyzes the decarboxylation of four acetate groups of uroporphyrinogen-III to yield coproporphyrinogen-III. This chain is Uroporphyrinogen decarboxylase, found in Trichormus variabilis (strain ATCC 29413 / PCC 7937) (Anabaena variabilis).